The sequence spans 559 residues: Branched-chain-amino-acid aminotransferase-like protein 2 (559 aa).

This sequence belongs to the class-IV pyridoxal-phosphate-dependent aminotransferase family.

This is Branched-chain-amino-acid aminotransferase-like protein 2 from Arabidopsis thaliana (Mouse-ear cress).